A 523-amino-acid polypeptide reads, in one-letter code: Pentatricopeptide repeat-containing protein At1g64580 (523 aa).

PPR repeat units follow at residues 43–77 (HHHHYRERLRNELHCIKFDDAFSLFCEMLQSRPIP), 78–112 (SIVDFTRVLTVIAKMNKFDIVIYLYHKMENLGISH), 113–147 (DLYSFTILIHCFCRCSRLSLALALLGKMMKLGFRP), 148–182 (SIVTLGSLLNGFCQGNRFQEAVSLVDSMDGFGFVP), 183–217 (NVVIYNTVINGLCKNRDLNNALEVFYCMEKKGIRA), 218–252 (DAVTYNTLISGLSNSGRWTDAARLLRDMVKRKIDP), 253–287 (NVIFFTALIDTFVKEGNLLEARNLYKEMIRRSVVP), 288–322 (NVFTYNSLINGFCIHGCLGDAKYMFDLMVSKGCFP), 323–357 (DVVTYNTLITGFCKSKRVEDGMKLFCEMTYQGLVG), 358–392 (DAFTYNTLIHGYCQAGKLNVAQKVFNRMVDCGVSP), 393–427 (DIVTYNILLDCLCNNGKIEKALVMVEDLQKSEMDV), 428–462 (DIITYNIIIQGLCRTDKLKEAWCLFRSLTRKGVKP), and 463–497 (DAIAYITMISGLCRKGLQREADKLCRRMKEDGFMP).

This sequence belongs to the PPR family. P subfamily.

The polypeptide is Pentatricopeptide repeat-containing protein At1g64580 (Arabidopsis thaliana (Mouse-ear cress)).